A 352-amino-acid polypeptide reads, in one-letter code: Pyruvate dehydrogenase E1 component subunit beta, mitochondrial (352 aa).

A mitochondrion-targeting transit peptide spans 1-21; the sequence is MALRKCGNLFVARLAGTSTRA. Residue Glu-81 coordinates thiamine diphosphate. Residues Ile-134, Ala-182, Ile-183, Asp-185, and Asn-187 each contribute to the K(+) site.

Tetramer of 2 alpha and 2 beta subunits. The cofactor is thiamine diphosphate.

It localises to the mitochondrion matrix. The catalysed reaction is N(6)-[(R)-lipoyl]-L-lysyl-[protein] + pyruvate + H(+) = N(6)-[(R)-S(8)-acetyldihydrolipoyl]-L-lysyl-[protein] + CO2. Its function is as follows. The pyruvate dehydrogenase complex catalyzes the overall conversion of pyruvate to acetyl-CoA and CO(2). It contains multiple copies of three enzymatic components: pyruvate dehydrogenase (E1), dihydrolipoamide acetyltransferase (E2) and lipoamide dehydrogenase (E3). The sequence is that of Pyruvate dehydrogenase E1 component subunit beta, mitochondrial (pdhb-1) from Caenorhabditis elegans.